We begin with the raw amino-acid sequence, 73 residues long: Small ribosomal subunit protein bS18c (73 aa).

The protein belongs to the bacterial ribosomal protein bS18 family. Part of the 30S ribosomal subunit.

It localises to the plastid. The protein resides in the chloroplast. The sequence is that of Small ribosomal subunit protein bS18c from Rhodomonas salina (Cryptomonas salina).